The chain runs to 679 residues: DNA ligase (679 aa).

NAD(+)-binding positions include 43-47 (DYVYD), 92-93 (SM), and glutamate 124. The active-site N6-AMP-lysine intermediate is the lysine 126. Arginine 147, glutamate 181, lysine 297, and lysine 321 together coordinate NAD(+). Zn(2+)-binding residues include cysteine 415, cysteine 418, cysteine 433, and cysteine 438. The region spanning 599–679 (TESAEWAGKR…RFDQAMKEEN (81 aa)) is the BRCT domain.

The protein belongs to the NAD-dependent DNA ligase family. LigA subfamily. It depends on Mg(2+) as a cofactor. Mn(2+) is required as a cofactor.

The enzyme catalyses NAD(+) + (deoxyribonucleotide)n-3'-hydroxyl + 5'-phospho-(deoxyribonucleotide)m = (deoxyribonucleotide)n+m + AMP + beta-nicotinamide D-nucleotide.. DNA ligase that catalyzes the formation of phosphodiester linkages between 5'-phosphoryl and 3'-hydroxyl groups in double-stranded DNA using NAD as a coenzyme and as the energy source for the reaction. It is essential for DNA replication and repair of damaged DNA. This is DNA ligase from Limosilactobacillus fermentum (strain NBRC 3956 / LMG 18251) (Lactobacillus fermentum).